Consider the following 746-residue polypeptide: Tudor domain-containing protein krimp (746 aa).

Residues 1–310 (MNLEDISMIM…RDIYNQILKD (310 aa)) form an involved in homooligomerization region. Positions 311–489 (MAAFPENTIV…PAGITEDDMA (179 aa)) are non-canonical tudor domain. The segment at 511–540 (KDEQRICRHYDPKLNGCFKGNNCRFAHEPF) adopts a C3H1-type zinc-finger fold. The region spanning 613–670 (KPRLLDIVLALYSDGCFYRAQIIDEFPSEYMIFYVDYGNTEFVPLSCLAPCENVDSFK) is the Tudor domain.

Belongs to the Tudor domain containing protein family. In terms of assembly, homooligomerizes (via N-terminus). Component of the ping-pong piRNA processing (4P) complex consisting of krimp, aub and AGO3; a single molecule of krimp can bind both aub and AGO3 without the need for homooligomerization. Interacts (via canonical tudor domain) with aub (via N-terminus when symmetrically dimethylated on arginine residues). Interacts (via non-canonical tudor domain) with AGO3 (via N-terminus when unmethylated on arginine residues); this interaction leads to symmetrical dimethylation on AGO3 arginine residues and its subsequent dissociation from krimp. Krimp associated AGO3 is mostly free of piRNA binding and the interaction plays an important role in the loading of AGO3 with piRNAs; piRNA binding stimulates methylation of ACO3 by the csul/PRMT5 methylosome complex and promotes dissociation of the two proteins. In terms of tissue distribution, widely expressed in female germline cells, including differentiating germ cells in germarium and egg chambers (at protein level).

Its subcellular location is the cytoplasm. It is found in the perinuclear region. The protein resides in the cytoplasmic ribonucleoprotein granule. Its function is as follows. Stable structural component of the perinuclear meiotic nuage, a germline-specific subcellular membraneless ribonucleoprotein compartment involved in production of transposable element-repressing Piwi-interacting RNA (piRNA)-induced silencing complexes (piRISCs), which are essential for maintaining germline integrity during oogenesis. Scaffold component of the ping-pong piRNA processing (4P) complex that recruits the Piwi proteins aub and AGO3 to specific subregions of the nuage where it coordinates their activity in the ping-pong amplification step of secondary piRNA biogenesis. Binds methylated aub, which is associated with piRNA, and unmethylated AGO3, which is not associated with piRNA, bringing the Piwi proteins into close proximity and facilitating the loading of freshly cut piRNAs generated by aub onto AGO3. Promotes asymmetric ping-pong amplification by aub and AGO3 to bias production towards antisense piRNAs capable of silencing transposable elements. Required for symmetrical dimethylation of AGO3, probably by recruitment to the nuage where methylosome components are located; dimethylation promotes AGO3 dissociation and interaction with other tudor-domain containing proteins such as tud. Required for the recruitment of mael to the perinuclear meiotic nuage. Required for the recruitment of aub to the nuage in testes but not in ovaries. Involved in repression of long interspersed nuclear elements (LINEs) including HeT-A, I-element LINEs and possibly mst40, but not TART LINEs. This is Tudor domain-containing protein krimp from Drosophila melanogaster (Fruit fly).